The sequence spans 1188 residues: DNA-directed RNA polymerase subunit beta (1188 aa).

It belongs to the RNA polymerase beta chain family. The RNAP catalytic core consists of 2 alpha, 1 beta, 1 beta' and 1 omega subunit. When a sigma factor is associated with the core the holoenzyme is formed, which can initiate transcription.

It carries out the reaction RNA(n) + a ribonucleoside 5'-triphosphate = RNA(n+1) + diphosphate. Its function is as follows. DNA-dependent RNA polymerase catalyzes the transcription of DNA into RNA using the four ribonucleoside triphosphates as substrates. The chain is DNA-directed RNA polymerase subunit beta from Streptococcus sanguinis (strain SK36).